We begin with the raw amino-acid sequence, 377 residues long: tRNA-specific 2-thiouridylase MnmA (377 aa).

ATP is bound by residues 16–23 (GMSGGVDS) and methionine 42. The interval 102-104 (NPD) is interaction with target base in tRNA. Cysteine 107 serves as the catalytic Nucleophile. Cysteines 107 and 204 form a disulfide. ATP is bound at residue glycine 131. Residues 154–156 (KDQ) form an interaction with tRNA region. The active-site Cysteine persulfide intermediate is cysteine 204. The interaction with tRNA stretch occupies residues 315 to 316 (RY).

Belongs to the MnmA/TRMU family.

The protein localises to the cytoplasm. The enzyme catalyses S-sulfanyl-L-cysteinyl-[protein] + uridine(34) in tRNA + AH2 + ATP = 2-thiouridine(34) in tRNA + L-cysteinyl-[protein] + A + AMP + diphosphate + H(+). Catalyzes the 2-thiolation of uridine at the wobble position (U34) of tRNA, leading to the formation of s(2)U34. The sequence is that of tRNA-specific 2-thiouridylase MnmA from Lacticaseibacillus paracasei (strain ATCC 334 / BCRC 17002 / CCUG 31169 / CIP 107868 / KCTC 3260 / NRRL B-441) (Lactobacillus paracasei).